A 203-amino-acid polypeptide reads, in one-letter code: GTP cyclohydrolase 1 (203 aa).

Positions 87, 90, and 158 each coordinate Zn(2+).

Belongs to the GTP cyclohydrolase I family. As to quaternary structure, homomer.

It catalyses the reaction GTP + H2O = 7,8-dihydroneopterin 3'-triphosphate + formate + H(+). It functions in the pathway cofactor biosynthesis; 7,8-dihydroneopterin triphosphate biosynthesis; 7,8-dihydroneopterin triphosphate from GTP: step 1/1. The polypeptide is GTP cyclohydrolase 1 (Xylella fastidiosa (strain M23)).